Consider the following 383-residue polypeptide: MSNHWLLPENIADVLPSEARKIEELRRRMLDLFRTYGYELVMPPMLEYLESLLTGTGHDLDLRTLKLVDQLSGRTMGLRADITPQVARIDAHLLNRPGVTRLCYAGNVLHARPAGFHATREPIQIGAEIYGHAGLEADVEIQELMLAALTAAGLSDIRIDLCHAGILEALLAGLPSIRKIEDALFAALETKDVPALRELTAGMPQTERDALLALPTLYGGVEVIERARATLPASPAIGRALDELAALAVQVRGASVNIDLSDLRGYHYHSGVMFAAYVAGLPNYVARGGRYDKVGEAFGRARPATGFSLDLREVAALSPVEVRALAIFAPWDADPALRAAIAGLRAGGEIVIQSLPGHTHELDEFNCDRQLVRKDAGWVVVPR.

It belongs to the class-II aminoacyl-tRNA synthetase family. HisZ subfamily. Heteromultimer composed of HisG and HisZ subunits.

It is found in the cytoplasm. Its pathway is amino-acid biosynthesis; L-histidine biosynthesis; L-histidine from 5-phospho-alpha-D-ribose 1-diphosphate: step 1/9. In terms of biological role, required for the first step of histidine biosynthesis. May allow the feedback regulation of ATP phosphoribosyltransferase activity by histidine. The chain is ATP phosphoribosyltransferase regulatory subunit from Cupriavidus taiwanensis (strain DSM 17343 / BCRC 17206 / CCUG 44338 / CIP 107171 / LMG 19424 / R1) (Ralstonia taiwanensis (strain LMG 19424)).